Here is a 690-residue protein sequence, read N- to C-terminus: MSLLPRTAEEFSSADYWERFFRKRGEKAFEWYGDYNSLCGVLHKYIKPRDKVLVVGCGNSELSEQLYDVGYRQLTNIDISETVVSHMNQRNAERRPDLSFQQLDATQTGFESGSFQVTLDKGTLDAMASEEDGALAGRMLAEVGRVLAVGGRYVCITLAQEHVIKLAVEHFVKGWAVRVHCLTGQQNEESDSSFALPVFVLVCTKFRQAPPFAVLELCQGEDGAPARLASVEELLSAVKERQAYNLMLHKLKGGTDSSSTPSLTLCHAASGRPRYTLTIQDGPPSAKTPRSNHFAIFIVPQGRESDWLYGSAEGRAQLASSAKFRRLVIVAMHRDQEYEDMQAVQSELSPVVMELAPPGMPANQQVPFLSVGGDLGWREVIGRGLSALTGEYSVEDVRGEDGYLYRRLIFMNNSQLVQSESRLQSAAAASSASKKKNKKKAKQPASTGAKDRSVDRGFLCCTHHEVMVAGLAMLGMDAINNKDQPVSVLLVGLGGGGLPQFVRDFVPCARVEVVELDPVVLDVAQTWFGFQIDDRLKVTLGDGLDHITTLESEGERYFDVIMFDVDSKDTTLGMSCPPPAFVETSLLKKVYSLLSPRGLFMLNLVCRDSALRKSVLDRVHSVFPCVFSRGIEGEVNEVLLCCRSSGEHKPHTVPQTLQQTAKDLQKTLRANSQTAPQIDITAMLNDLKVV.

The disordered stretch occupies residues 427-451 (AAASSASKKKNKKKAKQPASTGAKD). The segment covering 433–442 (SKKKNKKKAK) has biased composition (basic residues).

Belongs to the methyltransferase superfamily.

It catalyses the reaction L-lysyl-[protein] + S-adenosyl-L-methionine = N(6)-methyl-L-lysyl-[protein] + S-adenosyl-L-homocysteine + H(+). It carries out the reaction N(6)-methyl-L-lysyl-[protein] + S-adenosyl-L-methionine = N(6),N(6)-dimethyl-L-lysyl-[protein] + S-adenosyl-L-homocysteine + H(+). The enzyme catalyses N-terminal glycyl-L-lysyl-L-glutamyl-[protein] + 3 S-adenosyl-L-methionine = N-terminal N,N,N-trimethyl-glycyl-L-lysyl-L-glutamyl-[protein] + 3 S-adenosyl-L-homocysteine + 3 H(+). Functionally, dual methyltransferase that catalyzes methylation of elongation factor 1-alpha (eef1a1 and eef1a2) at two different positions, and is therefore involved in the regulation of mRNA translation. Via its C-terminus, methylates the N-terminus of eef1a1 and eef1a2. Via its N-terminus dimethylates lysine residues of eef1a1 and eef1a2. The protein is eEF1A lysine and N-terminal methyltransferase (mettl13) of Danio rerio (Zebrafish).